A 476-amino-acid chain; its full sequence is uncharacterized protein (476 aa).

Helical transmembrane passes span 4-24 (FFSF…LFGA), 81-101 (ALAI…AAFI), 141-161 (WMGV…FSGV), 174-194 (FDFP…LAIT), 207-227 (FVPL…VMNI), 233-253 (VIWS…GAAG), 300-320 (MIGI…LILL), 351-371 (FVTL…YIYA), 391-411 (ICTF…MWQL), and 414-434 (IIMA…SPVV).

This sequence belongs to the alanine or glycine:cation symporter (AGCS) (TC 2.A.25) family.

It is found in the cell inner membrane. This is an uncharacterized protein from Escherichia coli (strain K12).